A 91-amino-acid polypeptide reads, in one-letter code: Probable Fe(2+)-trafficking protein (91 aa).

It belongs to the Fe(2+)-trafficking protein family.

In terms of biological role, could be a mediator in iron transactions between iron acquisition and iron-requiring processes, such as synthesis and/or repair of Fe-S clusters in biosynthetic enzymes. This chain is Probable Fe(2+)-trafficking protein, found in Cellvibrio japonicus (strain Ueda107) (Pseudomonas fluorescens subsp. cellulosa).